Reading from the N-terminus, the 78-residue chain is U-scoloptoxin(04)-Er1b (78 aa).

The N-terminal stretch at 1–24 (MTRHLIFAAVLLVCLFVCWNAVGA) is a signal peptide. Residues 25–28 (QDAR) constitute a propeptide that is removed on maturation.

It belongs to the scoloptoxin-04 family. Contains 2 disulfide bonds. In terms of tissue distribution, expressed by the venom gland.

It localises to the secreted. The polypeptide is U-scoloptoxin(04)-Er1b (Ethmostigmus rubripes (Giant centipede)).